A 667-amino-acid polypeptide reads, in one-letter code: MITKSFFLKNFDRSKELIPLSYNDVFSAVNQFLKSYTDVNDIDIIEENLIEDPVFELDVLELLNEDPMLLLDSKNPRVQEAKIIANKAKKNIKDYFNLPIFFDTDSLDKNVSVYQKAELTEKKIQEIITSKKSAIIFKPIFEIEDCLIQPDAIIVHEKGLCEFVVIKATTNTKRKYFLEIIYDFVLFKKIGKYKLLNYYFCTVKYELQNKNNVSFFLNTEIKTSKNSFSLSSKEKDYFKNKPFNHPEKIAYIHKKKSNGVNGFLIVKLIDNLIKNNIVDLNKISDFVTKEIDSKSVRNIQPLIKNAAKIQINFWDQIQDIKKYQELKINQIVFNYSENFDSFWSNYLLRNLIKLVFAHKYNEIFKLSGKLANWSQLTYAYKENKSITINQLLHELNQKKSKANFNNSTNKISFFLEAWNSEKGFAIGNKFKNTWNKLKKKKVYFDFETISSSIRIINNSLPFSQIVTQCSLIVDKNEIDDKRKLNCENLIFDPLFISVNDFKKVIDSLYQNNCSDYSFVVFNKSFEKNRLLEMATLINEQIYKEKVKAIVDNLFDLADIFTIENNCLAFKQLNGFSSIKKVLTIIDESFLKASKSIGYQNLKIQKGDVAQEVALSRFLNCLNKNEWNQVAFELKKYCENDVRAMISIVLFIQDLIKKNDLFTFYSEN.

This is an uncharacterized protein from Mycoplasma genitalium (strain ATCC 33530 / DSM 19775 / NCTC 10195 / G37) (Mycoplasmoides genitalium).